Reading from the N-terminus, the 1442-residue chain is MEEEQQQQQQQQQAQKMQGTEQSAQLPPSAPGALPALVTGLQGTEANALQHKIKNSICKSIQSKVDCILQEVEKFTDLEKLFLYLKLPSGPSNVEKSDQNSLSSSRAQQTHAFSWIRNTLEEHPETSLPKQEVYDEYKSYCDNLGYHPLSAADFGKIMKNVFPNMKARRLGTRGKSKYCYSGLRKKAFVHMPSLPNLDFNTSGDGLDGIEVSTLLQSADEEVVSAACRLVCEWAQKVLSQPFDSVLDLARFLVKSHYIGTKSMAALTVMAGDSAGLKGITQTSAFVPMSESNSFHPQVRNLTSQVDAKQQLQRKIQKKQQEQKLQSPLPGELQVKKQDGTASNGITNICNGSPAILSPQPIGIVVAAVQSPIPVQRNRPLVTSPSPIGSSEGKVLPLNVQVVTQHMQSVKPKTPQNIPASPVGDRSARHRYPQILPKPASSNALTIRSPTTVVFTSSPIKTVVPTPHVSSLNVVKMTTISLAPSSAGTTVKQTSNNSTSATDETRTGPQIKNGSVVSLQSPVPRVGTPVASSVEVKTEPEIVSEDTAVRCQKSPDSSKVQKRTLMSFTHKGNQESVTSKLSHDATRDQAVKSIDHRAEGTRTKCKSRSVEGINVSSTGSNQSTLTLCVAPRTLFNNRSSQNTNGDQGVKDVRMCTKSPRKRLPTTGQESPIPPAKKSLLGQLPSECPAPEGIAIKKIPKTLSAKNDDAVTLALVPSKETEGNNTTLAANYSLSCVAEAPSDTPQELVASSQDVNLKLEGNVFKFVNESKSDNPFSQDAWQQIAEDADFPSSNCEQTQTIGVLDMSGTSGADNLQKPVWDTVDFEGIQQDTYSQQLEDSSLNQLQAHSSNQLPQRSDMTDPSFFSFDDDLTQDSIVEELVLMEEQMSMNNNPQNYGNLGMVLQNQSTASHGTPVPTHPGSAHFYHSVHSSVTPVHTPTPTPTPTPTLTPTPTSEMMCGTQSLSRESPCSRLAQTTPVDSALGSSRHTPVGTPHSNCSSSVPPSPVECRNPFAFTPISASISYDASIVSSSPVKPMQRPMATHPDKTKLEWMNNGYSSVVNPSISSHGILQSYKELDSFRKPHAFAVPGQSYQSQSRHHDNHFGRLTPVSPVQHQLSIINNASKQEGFAVPAPLDNKSTNSSGNSNFRCRSVSPAVHRQRNLSGNTNCPVSNVPQSNMTAFGTLVAPEIQSILNNIQPDSANSIAQRSQSVPLTVMMQTAFPSLQKQSNTQNITHVLLSKLDSDRDDAVRGLGINNLPSNYTARMNLTQILETSPMFSGASQQNILNSSSSSYEFQTPSYLTKNNSSEQISFTPGENQAQADDIGEQQLDFSSTVKDLLDGDSLQTNQQLVVQVASELNNASDFSSDIRLSSELSGSINDLNTLDPNLLFDPGRQPGQDEDATLEELNNDPLFQQICNESINSMTSSGFEWMESKDHPTVEMLG.

A disordered region spans residues 1–36 (MEEEQQQQQQQQQAQKMQGTEQSAQLPPSAPGALPA). Positions 112 to 187 (AFSWIRNTLE…YCYSGLRKKA (76 aa)) form a DNA-binding region, RFX-type winged-helix. The PxLPxI/L motif signature appears at 192 to 197 (PSLPNL). Disordered stretches follow at residues 406 to 426 (MQSV…GDRS), 485 to 514 (SAGT…KNGS), and 929 to 1001 (SVTP…SVPP). A compositionally biased stretch (pro residues) spans 935–947 (TPTPTPTPTPTLT). Polar residues predominate over residues 957–995 (GTQSLSRESPCSRLAQTTPVDSALGSSRHTPVGTPHSNC).

This sequence belongs to the RFX family.

It is found in the nucleus. Transcription factor. Acts as a transcriptional activator by binding to promoter regions of target genes. Plays a role in natural killer (NK) cell maintenance and immunity. Plays a role in the process of ciliogenesis in the neural tube and neural tube closure by regulating the expression of RFX4. The protein is DNA-binding protein RFX7 of Xenopus laevis (African clawed frog).